The primary structure comprises 392 residues: Phosphoglycerate kinase (392 aa).

Residues 19-21, arginine 34, 57-60, arginine 116, and arginine 149 each bind substrate; these read DYN and HLGR. ATP contacts are provided by residues lysine 199, glutamate 321, and 347-350; that span reads GGDS.

It belongs to the phosphoglycerate kinase family. Monomer.

The protein localises to the cytoplasm. It catalyses the reaction (2R)-3-phosphoglycerate + ATP = (2R)-3-phospho-glyceroyl phosphate + ADP. It functions in the pathway carbohydrate degradation; glycolysis; pyruvate from D-glyceraldehyde 3-phosphate: step 2/5. The sequence is that of Phosphoglycerate kinase from Thermomicrobium roseum (strain ATCC 27502 / DSM 5159 / P-2).